Reading from the N-terminus, the 491-residue chain is AAA-ATPase At2g46620 (491 aa).

Residues 1–21 (MGILWDSFLLLLVSTFALFLV) form a helical membrane-spanning segment. 238–245 (GPSGTGKS) provides a ligand contact to ATP. A disordered region spans residues 423–460 (GTGRRLLLENGSRKSTSEDVSDDMSGSLCGGGGGSSPA).

Belongs to the AAA ATPase family. BCS1 subfamily. Requires Mg(2+) as cofactor.

The protein resides in the membrane. The catalysed reaction is ATP + H2O = ADP + phosphate + H(+). The polypeptide is AAA-ATPase At2g46620 (Arabidopsis thaliana (Mouse-ear cress)).